The chain runs to 581 residues: Putative protein phosphatase 2C 22 (581 aa).

Positions 1-21 are cleaved as a signal peptide; the sequence is MVISVPLFSSVLLALVVAVPA. The PPM-type phosphatase domain occupies 102–478; that stretch reads KYASSAMQGL…NNATAILVQF (377 aa). 4 residues coordinate Mn(2+): aspartate 138, glycine 139, aspartate 373, and asparagine 469. The segment at 538–563 is disordered; that stretch reads SDEVAGGAAVAEQHQHNPEGGGEQQL.

It belongs to the PP2C family. Requires Mg(2+) as cofactor. Mn(2+) serves as cofactor.

The enzyme catalyses O-phospho-L-seryl-[protein] + H2O = L-seryl-[protein] + phosphate. It carries out the reaction O-phospho-L-threonyl-[protein] + H2O = L-threonyl-[protein] + phosphate. The sequence is that of Putative protein phosphatase 2C 22 from Oryza sativa subsp. japonica (Rice).